The sequence spans 994 residues: Phosphoenolpyruvate carboxylase (994 aa).

The disordered stretch occupies residues 1-66; that stretch reads MKSSGSARAT…QGRTREDKDR (66 aa). 2 stretches are compositionally biased toward low complexity: residues 14 to 25 and 41 to 54; these read AVSSSSAPAHAE and AAAR…AASA. Catalysis depends on residues His-204 and Lys-646.

The protein belongs to the PEPCase type 1 family. Requires Mg(2+) as cofactor.

It catalyses the reaction oxaloacetate + phosphate = phosphoenolpyruvate + hydrogencarbonate. Forms oxaloacetate, a four-carbon dicarboxylic acid source for the tricarboxylic acid cycle. The protein is Phosphoenolpyruvate carboxylase of Burkholderia pseudomallei (strain 668).